The sequence spans 123 residues: KTRTKDKYRVVYTDHQRLELEKEFHYSRYITIRRKSELAANLGLTERQVKIWFQNRRAKERKVNKKKQQQQQQQQQQPMPPTQLPLPLDGTPTPSGHPGSLCPTNAGLLGTPSPVPVKEEFLP.

Residues 5–64 (KDKYRVVYTDHQRLELEKEFHYSRYITIRRKSELAANLGLTERQVKIWFQNRRAKERKVN) constitute a DNA-binding region (homeobox). The tract at residues 8 to 29 (YRVVYTDHQRLELEKEFHYSRY) is interaction with DNA. The interval 47–58 (RQVKIWFQNRRA) is interaction with 5-mCpG DNA. Residues 57–68 (RAKERKVNKKKQ) show a composition bias toward basic residues. Residues 57-123 (RAKERKVNKK…PVPVKEEFLP (67 aa)) are disordered.

It belongs to the Caudal homeobox family. As to expression, intestinal epithelium.

Its subcellular location is the nucleus. Functionally, plays a role in transcriptional regulation. Involved in activated KRAS-mediated transcriptional activation of PRKD1 in colorectal cancer (CRC) cells. Binds to the PRKD1 promoter in colorectal cancer (CRC) cells. Could play a role in the terminal differentiation of the intestine. Binds preferentially to methylated DNA. In Rattus norvegicus (Rat), this protein is Homeobox protein CDX-1 (Cdx1).